Reading from the N-terminus, the 422-residue chain is UPF0761 membrane protein LHK_02978 (422 aa).

Helical transmembrane passes span 44–64 (LLSL…FPVF), 102–122 (LTAV…LTID), 141–161 (MLVY…GISG), 178–198 (LAGI…LTVL), 212–232 (ALIG…GFGL), and 246–266 (AFAT…TVLI).

Belongs to the UPF0761 family.

It localises to the cell inner membrane. This is UPF0761 membrane protein LHK_02978 from Laribacter hongkongensis (strain HLHK9).